We begin with the raw amino-acid sequence, 122 residues long: LYR motif-containing protein 1 (122 aa).

The protein belongs to the complex I LYR family.

Its function is as follows. May promote cell proliferation and inhibition of apoptosis of preadipocytes. The polypeptide is LYR motif-containing protein 1 (Lyrm1) (Mus musculus (Mouse)).